We begin with the raw amino-acid sequence, 268 residues long: Ubiquinone biosynthesis protein COQ4 homolog 1, mitochondrial (268 aa).

Positions 1–10 are enriched in basic residues; that stretch reads MFLRRVHPVR. The N-terminal 18 residues, 1 to 18, are a transit peptide targeting the mitochondrion; that stretch reads MFLRRVHPVRLGHASQRS. The tract at residues 1–44 is disordered; it reads MFLRRVHPVRLGHASQRSLTTTKSRNESTTTTVEAPQAAPSPPP. Positions 20-38 are enriched in low complexity; that stretch reads TTTKSRNESTTTTVEAPQA. Residues His-177, Asp-178, His-181, and Glu-193 each contribute to the Zn(2+) site.

Belongs to the COQ4 family. In terms of assembly, component of a multi-subunit COQ enzyme complex. Zn(2+) serves as cofactor.

The protein localises to the mitochondrion inner membrane. It catalyses the reaction a 4-hydroxy-3-methoxy-5-(all-trans-polyprenyl)benzoate + H(+) = a 2-methoxy-6-(all-trans-polyprenyl)phenol + CO2. It functions in the pathway cofactor biosynthesis; ubiquinone biosynthesis. Its function is as follows. Lyase that catalyzes the C1-decarboxylation of 4-hydroxy-3-methoxy-5-(all-trans-polyprenyl)benzoic acid into 2-methoxy-6-(all-trans-polyprenyl)phenol during ubiquinone biosynthesis. This Culex quinquefasciatus (Southern house mosquito) protein is Ubiquinone biosynthesis protein COQ4 homolog 1, mitochondrial.